The chain runs to 139 residues: Small ribosomal subunit protein uS11 (139 aa).

Residues 1–33 are disordered; that stretch reads MPPAKKGPATSARKGQKTRRREKKNVPHGAAHI. The segment covering 14–23 has biased composition (basic residues); it reads KGQKTRRREK.

This sequence belongs to the universal ribosomal protein uS11 family. In terms of assembly, part of the 30S ribosomal subunit. Interacts with proteins S7 and S18. Binds to IF-3.

Functionally, located on the platform of the 30S subunit, it bridges several disparate RNA helices of the 16S rRNA. Forms part of the Shine-Dalgarno cleft in the 70S ribosome. The protein is Small ribosomal subunit protein uS11 of Mycobacterium bovis (strain ATCC BAA-935 / AF2122/97).